The sequence spans 836 residues: Zinc fingers and homeoboxes protein 2 (836 aa).

The tract at residues 24–58 (LEEADRAKDKGLGVPPSDVSKERWAAEPEPSSKES) is disordered. Residues 27-77 (ADRAKDKGLGVPPSDVSKERWAAEPEPSSKESEVVEVRSVGESQSKKLQGG) are interaction with EFNB1. A compositionally biased stretch (basic and acidic residues) spans 42–58 (VSKERWAAEPEPSSKES). 2 consecutive C2H2-type zinc fingers follow at residues 78 to 101 (YECK…DMQH) and 110 to 133 (YVCA…SKFH). Positions 168–210 (SAPGSSDNDPGVSVGKTATVKTGKQKADAKKVPKKPDEAAPDN) are disordered. Positions 192–210 (QKADAKKVPKKPDEAAPDN) are enriched in basic and acidic residues. The required for homodimerization stretch occupies residues 195-358 (DAKKVPKKPD…PAQLTPTKVS (164 aa)). 4 consecutive DNA-binding regions (homeobox) follow at residues 263-324 (NTTK…WSPE), 439-501 (TPAS…IVHI), 530-591 (AQKF…EQAV), and 628-690 (SPSS…TLSW). A required for repressor activity region spans residues 263–446 (NTTKYNSALD…PLTPASDRKK (184 aa)). Positions 263-497 (NTTKYNSALD…SDHRYRCQRG (235 aa)) are required for interaction with NFYA. The tract at residues 317–446 (HGISWSPEEV…PLTPASDRKK (130 aa)) is required for nuclear localization. The interval 404 to 442 (GQKRPLVTPQAAPEPKRPHIAQVPEPPPKVANTPLTPAS) is disordered. Lysine 455 participates in a covalent cross-link: Glycyl lysine isopeptide (Lys-Gly) (interchain with G-Cter in SUMO2). 2 stretches are compositionally biased toward basic and acidic residues: residues 700–709 (SDDHGHDVAS) and 730–746 (YAKD…EKLV). The tract at residues 700-836 (SDDHGHDVAS…DSTPAEAGQA (137 aa)) is disordered. A phosphoserine mark is found at serine 824 and serine 826.

This sequence belongs to the ZHX family. Homodimer (via homeobox domain 1). Heterodimer with ZHX1 (via homeobox domain 1). Heterodimer with ZHX3 (via homeobox domain 1). Heterodimerization with ZHX1 is not necessary for repressor activity. Interacts (via homeobox domain) with NFYA (via N-terminus). Interacts with EFNB1 intracellular domain peptide; the interaction enhances ZHX2 transcriptional repression activity.

The protein resides in the nucleus. In terms of biological role, acts as a transcriptional repressor. Represses the promoter activity of the CDC25C gene stimulated by NFYA. May play a role in retinal development where it regulates the composition of bipolar cell populations, by promoting differentiation of bipolar OFF-type cells. In the brain, may promote maintenance and suppress differentiation of neural progenitor cells in the developing cortex. In Rattus norvegicus (Rat), this protein is Zinc fingers and homeoboxes protein 2 (Zhx2).